The chain runs to 306 residues: Mitochondrial basic amino acids transporter (306 aa).

Helical transmembrane passes span 2 to 22 (ALDF…GHPF), 61 to 81 (GLGS…GVQG), 96 to 116 (FLAG…MELA), 153 to 172 (GMVS…FLTY), 187 to 207 (LLVP…WLST), and 255 to 275 (LLRA…VLTY). Solcar repeat units follow at residues 2–86 (ALDF…TLRA), 90–178 (DSPL…MTRA), and 190–275 (PKLL…VLTY). Residues 284 to 306 (DSEAALGTSPTPAGSALAQPSSL) are disordered. Over residues 291–306 (TSPTPAGSALAQPSSL) the composition is skewed to polar residues.

This sequence belongs to the mitochondrial carrier (TC 2.A.29) family. In terms of tissue distribution, widely expressed, with highest levels in the brain, including cortex, cerebellum, hippocampus and hypothalamus, and moderate levels in liver, kidney, heart and testis.

It is found in the mitochondrion inner membrane. The catalysed reaction is L-lysine(out) + L-arginine(in) = L-lysine(in) + L-arginine(out). It carries out the reaction L-histidine(out) + L-arginine(in) = L-histidine(in) + L-arginine(out). The enzyme catalyses L-ornithine(in) + L-arginine(out) = L-ornithine(out) + L-arginine(in). It catalyses the reaction L-homoarginine(in) + L-arginine(out) = L-homoarginine(out) + L-arginine(in). The catalysed reaction is N(omega)-methyl-L-arginine(in) + L-arginine(out) = N(omega)-methyl-L-arginine(out) + L-arginine(in). It carries out the reaction L-arginine(in) = L-arginine(out). The enzyme catalyses L-lysine(in) = L-lysine(out). It catalyses the reaction L-ornithine(in) = L-ornithine(out). The catalysed reaction is L-histidine(out) = L-histidine(in). Functionally, mitochondrial transporter of arginine, lysine, homoarginine, methylarginine. Transports with a much lesser extent, ornithine and histidine. Does not transport carnitine nor acylcarnitines. Functions by both counter-exchange and uniport mechanisms. Plays a physiological role in the import of basic amino acids into mitochondria for mitochondrial protein synthesis and amino acid degradation. The sequence is that of Mitochondrial basic amino acids transporter (Slc25a29) from Mus musculus (Mouse).